Here is an 84-residue protein sequence, read N- to C-terminus: Envelope glycoprotein N (84 aa).

The N-terminal stretch at 1–26 (MSCKKSARQSLYVSLCLFYILVFAAA) is a signal peptide. At 27–47 (TEVDFYSPECHSHTYEIVLNS) the chain is on the virion surface side. A helical membrane pass occupies residues 48–68 (FSSIWLLINLFLLLCSFAIFL). Residues 69–84 (KYWCYKTFASETVKGY) lie on the Intravirion side of the membrane.

Belongs to the herpesviridae glycoprotein N family. As to quaternary structure, interacts (via N-terminus) with gM (via N-terminus). The gM-gN heterodimer forms the gCII complex.

It is found in the virion membrane. It localises to the host membrane. The protein localises to the host Golgi apparatus. Its subcellular location is the host trans-Golgi network. In terms of biological role, envelope glycoprotein necessary for proper maturation of gM and modulation of its membrane fusion activity. Also plays a critical role in virion morphogenesis. The polypeptide is Envelope glycoprotein N (Homo sapiens (Human)).